The following is a 522-amino-acid chain: Sensory neuron membrane protein 2 (522 aa).

At 1–7 the chain is on the cytoplasmic side; that stretch reads MLGKHTK. The chain crosses the membrane as a helical span at residues 8–28; sequence LFFGVSLVALIVSVILAAWGF. Residues 29 to 469 lie on the Extracellular side of the membrane; sequence PKIVSKQIQK…QSHTLLGYVE (441 aa). Asn-44, Asn-67, Asn-104, Asn-166, Asn-191, Asn-228, Asn-272, Asn-314, and Asn-343 each carry an N-linked (GlcNAc...) asparagine glycan. Cystine bridges form between Cys-268–Cys-338, Cys-299–Cys-362, and Cys-340–Cys-351. The chain crosses the membrane as a helical span at residues 470 to 490; that stretch reads AVRWALLAIAIVATAISAIAV. The Cytoplasmic segment spans residues 491–522; that stretch reads ARSGLIPVWPRNANSVSFILSPHPNSDVNKVH.

This sequence belongs to the CD36 family. As to expression, detected in both male and female antennal tissues. Expression is two to three fold higher in male compared to female antenna. Detected at low levels in all body tissues except the female abdomen.

Its subcellular location is the cell membrane. In terms of biological role, plays an olfactory role that is not restricted to pheromone sensitivity. This Ostrinia furnacalis (Asian corn borer) protein is Sensory neuron membrane protein 2.